The following is a 552-amino-acid chain: Non-structural protein NS1 (552 aa).

This sequence belongs to the orbivirus non-structural protein NS1 family.

This Antilocapra americana (Pronghorn) protein is Non-structural protein NS1 (Segment-5).